Consider the following 31-residue polypeptide: Cliotide T17 (31 aa).

Positions 1-31 (GTVPCGESCVFIPCITGIAGCSCKNKVCYLN) form a cross-link, cyclopeptide (Gly-Asn). 3 cysteine pairs are disulfide-bonded: cysteine 5–cysteine 21, cysteine 9–cysteine 23, and cysteine 14–cysteine 28.

Post-translationally, contains 3 disulfide bonds. In terms of processing, this is a cyclic peptide. In terms of tissue distribution, expressed in root nodules but not in seed.

In terms of biological role, probably participates in a plant defense mechanism. The chain is Cliotide T17 from Clitoria ternatea (Butterfly pea).